The following is a 149-amino-acid chain: Flagellar assembly factor FliW (149 aa).

This sequence belongs to the FliW family. Interacts with translational regulator CsrA and flagellin(s).

Its subcellular location is the cytoplasm. Functionally, acts as an anti-CsrA protein, binds CsrA and prevents it from repressing translation of its target genes, one of which is flagellin. Binds to flagellin and participates in the assembly of the flagellum. This Thermotoga petrophila (strain ATCC BAA-488 / DSM 13995 / JCM 10881 / RKU-1) protein is Flagellar assembly factor FliW.